The following is a 178-amino-acid chain: Glucagon-1 (178 aa).

A signal peptide spans 1 to 21 (MFGIHSLAGVLLLVIVQRQLA). 3 consecutive propeptides follow at residues 83–87 (SGAPS), 123–134 (ESAEESRNGPMS), and 171–178 (SNKRQEDH).

It belongs to the glucagon family.

It is found in the secreted. In terms of biological role, promotes hydrolysis of glycogen and lipids, and raises the blood sugar level. In Oncorhynchus mykiss (Rainbow trout), this protein is Glucagon-1 (gcg1).